We begin with the raw amino-acid sequence, 350 residues long: Transmembrane protein 185B (350 aa).

The next 7 membrane-spanning stretches (helical) occupy residues 16–36 (LIYT…DGII), 41–61 (WAVF…ASVG), 81–101 (FKAM…EVLV), 111–131 (FWLL…AACV), 168–188 (WLVV…VVLY), 211–231 (VTMA…EVLL), and 240–260 (TFSY…LMAT).

It belongs to the TMEM185 family.

It is found in the membrane. The protein is Transmembrane protein 185B (TMEM185B) of Homo sapiens (Human).